The sequence spans 267 residues: MSAGGAGGEAKGGFPPQTIMAIGAIGGLAGIYLGNFMPAQFSFFGGLGAICAMVWGADAVRRVASYGLGTGVPSIGMISLGMGIVAALFGLSVGGIAGPIVSFIAAAIIGAVIGVLANKVIGMGIPIMEQAMVEIAGAGTLVIIGLSVVIAGTFDYAEVVEYVVANGYIALIFIIGGMGILHPFNANLGPDEKQDRTLSVAVEKAAIALIITGFASSLHEGLMAAGLNIAVGVIIWAWAFMKYYGYVKRDSYAVVGTGLLPSAEELE.

7 helical membrane passes run 19–39, 40–60, 75–95, 96–116, 131–151, 162–182, and 221–241; these read IMAI…FMPA, QFSF…ADAV, IGMI…SVGG, IAGP…IGVL, AMVE…VVIA, YVVA…GILH, and GLMA…WAFM.

The protein belongs to the MtrC family. In terms of assembly, the complex is composed of 8 subunits; MtrA, MtrB, MtrC, MtrD, MtrE, MtrF, MtrG and MtrH.

Its subcellular location is the cell membrane. The catalysed reaction is 5-methyl-5,6,7,8-tetrahydromethanopterin + coenzyme M + 2 Na(+)(in) = 5,6,7,8-tetrahydromethanopterin + methyl-coenzyme M + 2 Na(+)(out). The protein operates within one-carbon metabolism; methanogenesis from CO(2); methyl-coenzyme M from 5,10-methylene-5,6,7,8-tetrahydromethanopterin: step 2/2. Its function is as follows. Part of a complex that catalyzes the formation of methyl-coenzyme M and tetrahydromethanopterin from coenzyme M and methyl-tetrahydromethanopterin. This is an energy-conserving, sodium-ion translocating step. This chain is Tetrahydromethanopterin S-methyltransferase subunit C, found in Methanosarcina acetivorans (strain ATCC 35395 / DSM 2834 / JCM 12185 / C2A).